The following is a 194-amino-acid chain: MMEVDLLYFEKKYHNCIVAGIDEAGRGPLAGPVVASAVIIDNANIITGIKDSKKLSKKTRELLYEQITSNYVWATAIISHTEIDDINILEATKKACSIAVANLSLEPEIVLVDGNMQFKDERFVSIINGDNLSLSIAAASIVAKVTRDRLMLDLSAELPQYLWHKNSGYGTKEHIEAINIHGLSPYHRRSFRCC.

An RNase H type-2 domain is found at 16–194 (CIVAGIDEAG…PYHRRSFRCC (179 aa)). A divalent metal cation contacts are provided by aspartate 22, glutamate 23, and aspartate 113.

The protein belongs to the RNase HII family. It depends on Mn(2+) as a cofactor. The cofactor is Mg(2+).

The protein localises to the cytoplasm. The catalysed reaction is Endonucleolytic cleavage to 5'-phosphomonoester.. Functionally, endonuclease that specifically degrades the RNA of RNA-DNA hybrids. The protein is Ribonuclease HII of Rickettsia massiliae (strain Mtu5).